The chain runs to 301 residues: MTRMAEKPISPTKTRTRFEDIQAHYDVSDDFFALFQDPTRTYSCAYFEPPELTLEEAQYAKVDLNLDKLDLKPGMTLLDIGCGWGTTMRRAVERFDVNVIGLTLSKNQHARCEQVLASIDTNRSRQVLLQGWEDFAEPVDRIVSIEAFEHFGHENYDDFFKRCFNIMPADGRMTVQSSVSYHPYEMAARGKKLSFETARFIKFIVTEIFPGGRLPSTEMMVEHGEKAGFTVPEPLSLRPHYIKTLRIWGDTLQSNKDKAIEVTSEEVYNRYMKYLRGCEHYFTDEMLDCSLVTYLKPGAAA.

S-adenosyl-L-methionine-binding positions include tyrosine 42 to serine 43, glycine 81 to glycine 83, threonine 103 to glutamine 108, tryptophan 132 to glutamate 133, and isoleucine 145. Cysteine 278 is an active-site residue.

The protein belongs to the CFA/CMAS family. As to quaternary structure, monomer.

The protein operates within lipid metabolism; mycolic acid biosynthesis. Inhibited by S-adenosyl-N-decyl-aminoethyl (SADAE). Functionally, involved in the biosynthesis of hydroxymycolate, a common precursor of oxygenated mycolic acids (methoxy-mycolate and keto-mycolate). Probably transfers a methyl group from the S-adenosylmethionine (SAM) cofactor and, subsequently or simultaneously, a water molecule onto the double bound of ethylene substrates, leading to the formation of the hydroxylated product at the distal position. Involved in the activation of the antitubercular drug thiacetazone (TAC). The protein is Hydroxymycolate synthase MmaA4 (mmaA4) of Mycobacterium tuberculosis (strain ATCC 25618 / H37Rv).